The following is a 149-amino-acid chain: SsrA-binding protein (149 aa).

This sequence belongs to the SmpB family.

Its subcellular location is the cytoplasm. Functionally, required for rescue of stalled ribosomes mediated by trans-translation. Binds to transfer-messenger RNA (tmRNA), required for stable association of tmRNA with ribosomes. tmRNA and SmpB together mimic tRNA shape, replacing the anticodon stem-loop with SmpB. tmRNA is encoded by the ssrA gene; the 2 termini fold to resemble tRNA(Ala) and it encodes a 'tag peptide', a short internal open reading frame. During trans-translation Ala-aminoacylated tmRNA acts like a tRNA, entering the A-site of stalled ribosomes, displacing the stalled mRNA. The ribosome then switches to translate the ORF on the tmRNA; the nascent peptide is terminated with the 'tag peptide' encoded by the tmRNA and targeted for degradation. The ribosome is freed to recommence translation, which seems to be the essential function of trans-translation. This chain is SsrA-binding protein, found in Carboxydothermus hydrogenoformans (strain ATCC BAA-161 / DSM 6008 / Z-2901).